A 209-amino-acid polypeptide reads, in one-letter code: LexA repressor (209 aa).

The segment at residues 29–49 (VREIGSAIGLSSTSTVHGHID) is a DNA-binding region (H-T-H motif). Residues Ser-130 and Lys-168 each act as for autocatalytic cleavage activity in the active site.

This sequence belongs to the peptidase S24 family. Homodimer.

It carries out the reaction Hydrolysis of Ala-|-Gly bond in repressor LexA.. Represses a number of genes involved in the response to DNA damage (SOS response), including recA and lexA. In the presence of single-stranded DNA, RecA interacts with LexA causing an autocatalytic cleavage which disrupts the DNA-binding part of LexA, leading to derepression of the SOS regulon and eventually DNA repair. In Pediococcus pentosaceus (strain ATCC 25745 / CCUG 21536 / LMG 10740 / 183-1w), this protein is LexA repressor.